The sequence spans 429 residues: Ribosomal RNA small subunit methyltransferase B (429 aa).

S-adenosyl-L-methionine-binding positions include 254-260 (CAAPGGK), D277, D303, and D322. C375 (nucleophile) is an active-site residue.

It belongs to the class I-like SAM-binding methyltransferase superfamily. RsmB/NOP family.

The protein resides in the cytoplasm. The enzyme catalyses cytidine(967) in 16S rRNA + S-adenosyl-L-methionine = 5-methylcytidine(967) in 16S rRNA + S-adenosyl-L-homocysteine + H(+). Specifically methylates the cytosine at position 967 (m5C967) of 16S rRNA. This chain is Ribosomal RNA small subunit methyltransferase B, found in Shigella sonnei (strain Ss046).